Here is a 70-residue protein sequence, read N- to C-terminus: Small ribosomal subunit protein bS21 (70 aa).

This sequence belongs to the bacterial ribosomal protein bS21 family.

The protein is Small ribosomal subunit protein bS21 of Polynucleobacter asymbioticus (strain DSM 18221 / CIP 109841 / QLW-P1DMWA-1) (Polynucleobacter necessarius subsp. asymbioticus).